Consider the following 43-residue polypeptide: Protein PsbN 1 (43 aa).

The helical transmembrane segment at 3 to 23 threads the bilayer; that stretch reads TATILGILIAAAVVGITVLAL.

It belongs to the PsbN family.

The protein localises to the cellular thylakoid membrane. Functionally, may play a role in photosystem I and II biogenesis. This Microcystis aeruginosa (strain NIES-843 / IAM M-2473) protein is Protein PsbN 1.